Here is a 300-residue protein sequence, read N- to C-terminus: Putative hydro-lyase Dshi_3152 (300 aa).

This sequence belongs to the D-glutamate cyclase family.

This Dinoroseobacter shibae (strain DSM 16493 / NCIMB 14021 / DFL 12) protein is Putative hydro-lyase Dshi_3152.